The primary structure comprises 568 residues: Zinc finger protein 76 (568 aa).

Lysine 24 participates in a covalent cross-link: Glycyl lysine isopeptide (Lys-Gly) (interchain with G-Cter in SUMO2). 3 repeat units span residues 34 to 45 (IQLEDGTTAYIH), 62 to 73 (VQLEDGSMAYIH), and 88 to 99 (VQLEDGSTAYIH). A 3 X 12 AA approximate repeats region spans residues 34–99 (IQLEDGTTAY…LEDGSTAYIH (66 aa)). 7 consecutive C2H2-type zinc fingers follow at residues 165–189 (FRCG…ERAH), 195–219 (YRCD…VRTH), 225–249 (YKCP…VRTH), 255–279 (FRCP…VRTH), 285–309 (YTCP…VRIH), 315–339 (YVCT…HVVH), and 345–368 (YTCS…RSAH). Positions 365-401 (RSAHGELEATEESEQALYEQQQLEAASAAEESPSPKP) are disordered. Low complexity predominate over residues 379-396 (QALYEQQQLEAASAAEES).

It belongs to the krueppel C2H2-type zinc-finger protein family.

It is found in the nucleus. Functionally, may be involved in transcriptional regulation. This chain is Zinc finger protein 76 (Znf76), found in Rattus norvegicus (Rat).